Reading from the N-terminus, the 519-residue chain is MKPYYVTTAIAYPNAAPHVGHAYEYIATDAIARFKRLDGYDVRFLTGTDEHGLKVAQAAAAAGVPTAALARRNSDVFQRMQEALNISFDRFIRTTDADHHEASKELWRRMSAAGDIYLDNYSGWYSVRDERFFVESETQLVDGTRLTVETGTPVTWTEEQTYFFRLSAYTDKLLAHYHANPDFIAPETRRNEVISFVSGGLDDLSISRTSFDWGVQVPEHPDHVMYVWVDALTNYLTGAGFPDTDSELFRRYWPADLHMIGKDIIRFHAVYWPAFLMSAGIELPRRIFAHGFLHNRGEKMSKSVGNIVDPVALAEALGVDQVRYFLLREVPFGQDGSYSDEAIVTRINTDLANELGNLAQRSLSMVAKNLDGRVPNPGEFADADAALLATADGLLERVRGHFDAQAMHLALEAIWLMLGDANKYFSVQQPWVLRKSESEADQARFRTTLYVTCEVVRIAALLIQPVMPESAGKILDLLGQAPNQRSFAAVGVRLTPGTALPPPTGVFPRYQPPQPPEGK.

Positions 11 to 21 (AYPNAAPHVGH) match the 'HIGH' region motif. The 'KMSKS' region signature appears at 299 to 303 (KMSKS). Lys302 provides a ligand contact to ATP. Residues 500-519 (LPPPTGVFPRYQPPQPPEGK) form a disordered region.

This sequence belongs to the class-I aminoacyl-tRNA synthetase family. MetG type 2B subfamily. As to quaternary structure, monomer.

The protein localises to the cytoplasm. It carries out the reaction tRNA(Met) + L-methionine + ATP = L-methionyl-tRNA(Met) + AMP + diphosphate. Is required not only for elongation of protein synthesis but also for the initiation of all mRNA translation through initiator tRNA(fMet) aminoacylation. In Mycobacterium tuberculosis (strain CDC 1551 / Oshkosh), this protein is Methionine--tRNA ligase (metG).